Reading from the N-terminus, the 187-residue chain is Accessory gene regulator protein B (187 aa).

A run of 5 helical transmembrane segments spans residues 49-69 (ISIF…YMLI), 82-102 (ILCY…LINI), 106-126 (FTYL…YAPA), 144-164 (VSII…PFYA), and 166-186 (FMLL…FPKE).

The protein belongs to the AgrB family.

It localises to the cell membrane. Its function is as follows. Essential for the production of a quorum sensing system signal molecule, the autoinducing peptide (AIP). This quorum sensing system is responsible for the regulation of the expression of virulence factor genes. Involved in the proteolytic processing of AgrD, the precursor of AIP. The protein is Accessory gene regulator protein B of Staphylococcus aureus (strain bovine RF122 / ET3-1).